A 334-amino-acid chain; its full sequence is N-acetyl-gamma-glutamyl-phosphate reductase (334 aa).

Residue cysteine 145 is part of the active site. Positions 173 to 192 are disordered; that stretch reads GISGSGQDPTEGTHYPNVTQ.

This sequence belongs to the NAGSA dehydrogenase family. Type 1 subfamily.

The protein resides in the cytoplasm. It catalyses the reaction N-acetyl-L-glutamate 5-semialdehyde + phosphate + NADP(+) = N-acetyl-L-glutamyl 5-phosphate + NADPH + H(+). It functions in the pathway amino-acid biosynthesis; L-arginine biosynthesis; N(2)-acetyl-L-ornithine from L-glutamate: step 3/4. Its function is as follows. Catalyzes the NADPH-dependent reduction of N-acetyl-5-glutamyl phosphate to yield N-acetyl-L-glutamate 5-semialdehyde. The protein is N-acetyl-gamma-glutamyl-phosphate reductase of Methanocella arvoryzae (strain DSM 22066 / NBRC 105507 / MRE50).